The primary structure comprises 865 residues: MGKALVIVESPAKAKTINKYLGNDYVVKSSVGHIRDLPTSGSAAKKSADSTSTKTAKKPKKDERGALVNRMGVDPWHNWDAHYEVLPGKEKVVSELKQLAEKADHIYLATDLDREGEAIAWHLREVIGGDDARYSRVVFNEITKNAIRQAFEQPGELNINRVNAQQARRFMDRVVGYMVSPLLWKKIARGLSAGRVQSVAVRLVVEREREIKAFVPEEFWEIDANTTTPSGEALPLQVTHQNDKPFRPVNREQTLAAVSLLEKARYSVLEREDKPTSSKPGAPFITSTLQQAASTRLGFGVKKTMMMAQRLYEAGYITYMRTDSTNLSQDAVNMVRGYIGDNFGKKYLPDNPNQYASKENSQEAHEAIRPSDVAVMAESLKDMEADAQKLYQLIWRQFVACQMTPAQYDSTTLTVGAGEFRLKARGRILRFDGWTKVMPALRKGDEDRTLPAVNKGDALTLLELTPAQHFTKPPARFSEASLVKELEKRGIGRPSTYASIISTIQDRGYVRVENRRFYAEKMGEIVTDRLEENFRELMNYDFTAQMEDSLDQVANHQAEWKAVLDNFFSDFTQQLDKAEKDPEEGGMRPNQMVLTSIDCPTCGRKMGIRTASTGVFLGCSGYALSPKERCKTTINLVPENEVLNVLEGDDAETNALRAKRRCQKCGTAMDSYLIDPKRKLHVCGNNPTCDGYEIEEGEFRIKGYDGPIVECEKCGSEMHLKMGRFGKYMACTNDECKNTRKILRNGEVAPPKEDPVPLPELPCEKSDAYFVLRDGAAGIFLAANTFPKSRETRAPLVEELYRFRDRLPEKLRYLADAPQQDPEGNKTVVRFSRKTKQQYVAAEKDGKATGWSAFFVDGKWVEGKK.

The region spanning 3 to 142 (KALVIVESPA…RYSRVVFNEI (140 aa)) is the Toprim domain. Glu9 contributes to the Mg(2+) binding site. Residues 37 to 65 (LPTSGSAAKKSADSTSTKTAKKPKKDERG) form a disordered region. A compositionally biased stretch (low complexity) spans 39–54 (TSGSAAKKSADSTSTK). A Mg(2+)-binding site is contributed by Asp111. The region spanning 158–575 (NINRVNAQQA…NFFSDFTQQL (418 aa)) is the Topo IA-type catalytic domain. Residues 192-197 (SAGRVQ) are interaction with DNA. Residue Tyr319 is the O-(5'-phospho-DNA)-tyrosine intermediate of the active site. 3 consecutive C4-type zinc fingers follow at residues 599 to 630 (CPTCGRKMGIRTASTGVFLGCSGYALSPKERC), 662 to 689 (CQKCGTAMDSYLIDPKRKLHVCGNNPTC), and 711 to 736 (CEKCGSEMHLKMGRFGKYMACTNDEC).

Belongs to the type IA topoisomerase family. In terms of assembly, monomer. Mg(2+) serves as cofactor.

It carries out the reaction ATP-independent breakage of single-stranded DNA, followed by passage and rejoining.. Its function is as follows. Releases the supercoiling and torsional tension of DNA, which is introduced during the DNA replication and transcription, by transiently cleaving and rejoining one strand of the DNA duplex. Introduces a single-strand break via transesterification at a target site in duplex DNA. The scissile phosphodiester is attacked by the catalytic tyrosine of the enzyme, resulting in the formation of a DNA-(5'-phosphotyrosyl)-enzyme intermediate and the expulsion of a 3'-OH DNA strand. The free DNA strand then undergoes passage around the unbroken strand, thus removing DNA supercoils. Finally, in the religation step, the DNA 3'-OH attacks the covalent intermediate to expel the active-site tyrosine and restore the DNA phosphodiester backbone. In Salmonella typhimurium (strain LT2 / SGSC1412 / ATCC 700720), this protein is DNA topoisomerase 1.